A 366-amino-acid chain; its full sequence is tRNA/tmRNA (uracil-C(5))-methyltransferase (366 aa).

S-adenosyl-L-methionine-binding residues include Gln190, Tyr218, Asn223, Glu239, and Asp299. Cys324 functions as the Nucleophile in the catalytic mechanism. Catalysis depends on Glu358, which acts as the Proton acceptor.

This sequence belongs to the class I-like SAM-binding methyltransferase superfamily. RNA M5U methyltransferase family. TrmA subfamily.

The catalysed reaction is uridine(54) in tRNA + S-adenosyl-L-methionine = 5-methyluridine(54) in tRNA + S-adenosyl-L-homocysteine + H(+). It carries out the reaction uridine(341) in tmRNA + S-adenosyl-L-methionine = 5-methyluridine(341) in tmRNA + S-adenosyl-L-homocysteine + H(+). Its function is as follows. Dual-specificity methyltransferase that catalyzes the formation of 5-methyluridine at position 54 (m5U54) in all tRNAs, and that of position 341 (m5U341) in tmRNA (transfer-mRNA). The polypeptide is tRNA/tmRNA (uracil-C(5))-methyltransferase (Cellvibrio japonicus (strain Ueda107) (Pseudomonas fluorescens subsp. cellulosa)).